The primary structure comprises 117 residues: Photosystem II reaction center Psb28 protein (117 aa).

Belongs to the Psb28 family. As to quaternary structure, part of the photosystem II complex.

It is found in the cellular thylakoid membrane. This is Photosystem II reaction center Psb28 protein from Prochlorococcus marinus (strain MIT 9301).